A 771-amino-acid polypeptide reads, in one-letter code: Protein lin-54 homolog (771 aa).

Disordered regions lie at residues 21–44 and 68–105; these read AMDE…SAQV and TNAK…IPSL. Low complexity predominate over residues 72–92; the sequence is STTSSTTQLLLTPSSSSSTTT. A phosphoserine mark is found at Ser288, Ser292, and Ser308. The region spanning 544–657 is the CRC domain; sequence PRKPCNCTRS…KCMGCKNFEE (114 aa). The interval 546-559 is DNA-binding; sequence KPCNCTRSQCLKLY. Residues Cys548, Cys550, Cys555, Cys560, Cys562, Cys569, Cys572, Cys574, and Cys577 each contribute to the Zn(2+) site. Residues 606 to 619 form a linker region; it reads IGKGKEGESDRRHS. The Zn(2+) site is built by Cys622, Cys624, Cys629, Cys634, Cys636, Cys643, Cys647, Cys649, and Cys652. The tract at residues 622–635 is DNA-binding; it reads CNCKKSGCLKNYCE.

This sequence belongs to the lin-54 family. In terms of assembly, component of the DREAM complex.

It localises to the nucleus. Its function is as follows. Component of the DREAM complex, a multiprotein complex that can both act as a transcription activator or repressor depending on the context. Specifically recognizes the consensus motif 5'-TTYRAA-3' in target DNA. The chain is Protein lin-54 homolog (lin54) from Danio rerio (Zebrafish).